We begin with the raw amino-acid sequence, 287 residues long: Centromere protein P (287 aa).

Positions methionine 1 to phenylalanine 37 form a coiled coil.

The protein belongs to the CENP-P/CTF19 family. In terms of assembly, component of the CENPA-HI complex, at least composed of CENPH, CENPI, CENPK, CENPL, CENPM, CENPO and CENPP.

The protein resides in the nucleus. It localises to the chromosome. It is found in the centromere. Component of the CENPA-HI complex, a centromeric complex involved in assembly of kinetochore proteins, mitotic progression and chromosome segregation. The sequence is that of Centromere protein P (CENPP) from Gallus gallus (Chicken).